We begin with the raw amino-acid sequence, 555 residues long: Oxygen-dependent choline dehydrogenase (555 aa).

4–33 (DYIIIGAGSAGNVLATRLTEDPDVTVLLLE) is an FAD binding site. His-473 functions as the Proton acceptor in the catalytic mechanism.

Belongs to the GMC oxidoreductase family. FAD serves as cofactor.

The enzyme catalyses choline + A = betaine aldehyde + AH2. It catalyses the reaction betaine aldehyde + NAD(+) + H2O = glycine betaine + NADH + 2 H(+). The protein operates within amine and polyamine biosynthesis; betaine biosynthesis via choline pathway; betaine aldehyde from choline (cytochrome c reductase route): step 1/1. In terms of biological role, involved in the biosynthesis of the osmoprotectant glycine betaine. Catalyzes the oxidation of choline to betaine aldehyde and betaine aldehyde to glycine betaine at the same rate. This is Oxygen-dependent choline dehydrogenase from Proteus mirabilis (strain HI4320).